Reading from the N-terminus, the 370-residue chain is Apolipoprotein A-V (370 aa).

Residues 1–21 (MASMIALLTWALALLPALASA) form the signal peptide. A Phosphoserine modification is found at Ser59.

Belongs to the apolipoprotein A1/A4/E family. Interacts with GPIHBP1. Interacts with SORL1; this interaction leads to APOA5 internalization and sorting either to lysosomes and degradation, or to the trans-Golgi network.

It is found in the secreted. It localises to the early endosome. The protein resides in the late endosome. The protein localises to the golgi apparatus. Its subcellular location is the trans-Golgi network. Its function is as follows. Minor apolipoprotein mainly associated with HDL and to a lesser extent with VLDL. May also be associated with chylomicrons. Important determinant of plasma triglyceride (TG) levels by both being a potent stimulator of apo-CII lipoprotein lipase (LPL) TG hydrolysis and an inhibitor of the hepatic VLDL-TG production rate (without affecting the VLDL-apoB production rate). Activates poorly lecithin:cholesterol acyltransferase (LCAT) and does not enhance efflux of cholesterol from macrophages. Binds heparin. This chain is Apolipoprotein A-V (APOA5), found in Acinonyx jubatus (Cheetah).